The chain runs to 179 residues: ATP synthase subunit delta (179 aa).

The protein belongs to the ATPase delta chain family. In terms of assembly, F-type ATPases have 2 components, F(1) - the catalytic core - and F(0) - the membrane proton channel. F(1) has five subunits: alpha(3), beta(3), gamma(1), delta(1), epsilon(1). F(0) has three main subunits: a(1), b(2) and c(10-14). The alpha and beta chains form an alternating ring which encloses part of the gamma chain. F(1) is attached to F(0) by a central stalk formed by the gamma and epsilon chains, while a peripheral stalk is formed by the delta and b chains.

The protein localises to the cell membrane. Functionally, f(1)F(0) ATP synthase produces ATP from ADP in the presence of a proton or sodium gradient. F-type ATPases consist of two structural domains, F(1) containing the extramembraneous catalytic core and F(0) containing the membrane proton channel, linked together by a central stalk and a peripheral stalk. During catalysis, ATP synthesis in the catalytic domain of F(1) is coupled via a rotary mechanism of the central stalk subunits to proton translocation. In terms of biological role, this protein is part of the stalk that links CF(0) to CF(1). It either transmits conformational changes from CF(0) to CF(1) or is implicated in proton conduction. The chain is ATP synthase subunit delta from Natranaerobius thermophilus (strain ATCC BAA-1301 / DSM 18059 / JW/NM-WN-LF).